Here is a 955-residue protein sequence, read N- to C-terminus: UPF0182 protein tll1193 (955 aa).

9 helical membrane-spanning segments follow: residues 6–26, 53–73, 98–118, 163–183, 186–206, 240–260, 280–300, 324–344, and 354–374; these read VVPLMPPWLRWLCGLVLAIAL, WSVQALLFLAVAGVSQLFYGC, GLGLWQLLLCAGSLNWLLIVA, WLLGLSLVAVILGLWLPVGLF, LGILLSLAMGAIASLSWPVVL, LWLVNLSVVGLGGTTLGYLLA, LQGLSAFVFATVALSFWLERY, LYGWLSASAFGVACLLAWSAI, and GPIAPGLFGFTLGYLGVILIV.

This sequence belongs to the UPF0182 family.

It localises to the cell membrane. The chain is UPF0182 protein tll1193 from Thermosynechococcus vestitus (strain NIES-2133 / IAM M-273 / BP-1).